A 31-amino-acid chain; its full sequence is Hemocyanin subunit 1 (31 aa).

It belongs to the tyrosinase family. Hemocyanin subfamily. In terms of tissue distribution, hemolymph.

It is found in the secreted. The protein localises to the extracellular space. Its function is as follows. Hemocyanins are copper-containing oxygen carriers occurring freely dissolved in the hemolymph of many mollusks and arthropods. In Homarus americanus (American lobster), this protein is Hemocyanin subunit 1.